The primary structure comprises 675 residues: DNA ligase (675 aa).

NAD(+) is bound by residues 33–37 (DAEYD), 82–83 (SL), and E114. The N6-AMP-lysine intermediate role is filled by K116. The NAD(+) site is built by R137, E174, K291, and K315. Residues C409, C412, C427, and C433 each coordinate Zn(2+). Positions 595–675 (AGDNPFAGKT…EMIRLLDQSK (81 aa)) constitute a BRCT domain.

It belongs to the NAD-dependent DNA ligase family. LigA subfamily. Mg(2+) is required as a cofactor. It depends on Mn(2+) as a cofactor.

The catalysed reaction is NAD(+) + (deoxyribonucleotide)n-3'-hydroxyl + 5'-phospho-(deoxyribonucleotide)m = (deoxyribonucleotide)n+m + AMP + beta-nicotinamide D-nucleotide.. Functionally, DNA ligase that catalyzes the formation of phosphodiester linkages between 5'-phosphoryl and 3'-hydroxyl groups in double-stranded DNA using NAD as a coenzyme and as the energy source for the reaction. It is essential for DNA replication and repair of damaged DNA. This chain is DNA ligase, found in Proteus mirabilis (strain HI4320).